The chain runs to 1181 residues: Integrin alpha-2 (1181 aa).

The signal sequence occupies residues 1–29 (MGPERTGAAPLPLLLVLALSQGILNCCLA). The Extracellular portion of the chain corresponds to 30 to 1132 (YNVGLPEAKI…KPDEKAEVPT (1103 aa)). 2 FG-GAP repeats span residues 34–92 (LPEA…TATC) and 101–161 (TSIP…LSAS). C83 and C92 form a disulfide bridge. N-linked (GlcNAc...) asparagine glycans are attached at residues N105, N112, and N343. One can recognise a VWFA domain in the interval 188–365 (WDAVKNFLEK…TLGEQIFSIE (178 aa)). FG-GAP repeat units lie at residues 366-420 (GTVQ…LIFP), 423-475 (AFDQ…ENGN), 477-539 (TVIQ…ILGQ), 540-598 (HQFL…TIRT), and 602-664 (QKIL…FTPE). 3 N-linked (GlcNAc...) asparagine glycosylation sites follow: N432, N460, and N475. Ca(2+) is bound by residues D499, D501, D503, D507, D563, N565, D567, D571, D627, N629, D631, and D635. Disulfide bonds link C680/C737, C789/C795, C865/C876, C1019/C1050, and C1055/C1060. N699 carries N-linked (GlcNAc...) asparagine glycosylation. N-linked (GlcNAc...) asparagine glycans are attached at residues N1057, N1074, and N1081. Residues 1133 to 1154 (GVIIGSIIAGILLLLALVAILW) form a helical membrane-spanning segment. The interaction with HPS5 stretch occupies residues 1155–1161 (KLGFFKR). Residues 1155–1181 (KLGFFKRKYEKMTKNPDEIDETTELSS) lie on the Cytoplasmic side of the membrane. The GFFKR motif signature appears at 1157–1161 (GFFKR).

Belongs to the integrin alpha chain family. In terms of assembly, heterodimer of an alpha and a beta subunit. Alpha-2 associates with beta-1. Interacts with HPS5 and RAB21. (Microbial infection) Integrin ITGA2:ITGB1 interacts (via ITAG2 I-domain) with rotavirus A VP4 protein. As to quaternary structure, (Microbial infection) Integrin ITGA2:ITGB1 interacts with human echoviruses 1 and 8 capsid proteins.

It is found in the membrane. Integrin alpha-2/beta-1 is a receptor for laminin, collagen, collagen C-propeptides, fibronectin and E-cadherin. It recognizes the proline-hydroxylated sequence G-F-P-G-E-R in collagen. It is responsible for adhesion of platelets and other cells to collagens, modulation of collagen and collagenase gene expression, force generation and organization of newly synthesized extracellular matrix. In terms of biological role, (Microbial infection) Integrin ITGA2:ITGB1 acts as a receptor for Human rotavirus A. Functionally, (Microbial infection) Integrin ITGA2:ITGB1 acts as a receptor for Human echoviruses 1 and 8. The sequence is that of Integrin alpha-2 (ITGA2) from Homo sapiens (Human).